We begin with the raw amino-acid sequence, 200 residues long: Probable GTP-binding protein EngB (200 aa).

The region spanning 24 to 198 is the EngB-type G domain; that stretch reads EGMEVAFAGR…QAQLDEWLGI (175 aa). GTP contacts are provided by residues 32–39, 59–63, 77–80, 144–147, and 177–179; these read GRSNVGKS, GRTQM, DLPG, TKSD, and FSA. 2 residues coordinate Mg(2+): serine 39 and threonine 61.

Belongs to the TRAFAC class TrmE-Era-EngA-EngB-Septin-like GTPase superfamily. EngB GTPase family. Mg(2+) serves as cofactor.

Functionally, necessary for normal cell division and for the maintenance of normal septation. The polypeptide is Probable GTP-binding protein EngB (Nitrosococcus oceani (strain ATCC 19707 / BCRC 17464 / JCM 30415 / NCIMB 11848 / C-107)).